An 80-amino-acid polypeptide reads, in one-letter code: Small membrane A-kinase anchor protein (80 aa).

Gly2 carries the N-myristoyl glycine lipid modification.

This sequence belongs to the small membrane AKAP family. Post-translationally, may be palmitoylated at Cys-3.

The protein localises to the cell membrane. Its function is as follows. Binds to type I regulatory subunits of protein kinase A and may anchor/target them to the plasma membrane. In Tetraodon nigroviridis (Spotted green pufferfish), this protein is Small membrane A-kinase anchor protein.